Reading from the N-terminus, the 366-residue chain is tRNA pseudouridine synthase B (366 aa).

The active-site Nucleophile is the Asp44.

The protein belongs to the pseudouridine synthase TruB family. Type 1 subfamily.

The enzyme catalyses uridine(55) in tRNA = pseudouridine(55) in tRNA. Functionally, responsible for synthesis of pseudouridine from uracil-55 in the psi GC loop of transfer RNAs. This Treponema pallidum (strain Nichols) protein is tRNA pseudouridine synthase B.